Reading from the N-terminus, the 519-residue chain is Putative lipase ATG15 (519 aa).

Residues 1–5 are Cytoplasmic-facing; it reads MYIPG. A helical; Signal-anchor for type II membrane protein membrane pass occupies residues 6–26; that stretch reads PLRLSSYLLPFLSSPSPPAQS. The Lumenal segment spans residues 27–519; the sequence is SPDTRTISFK…CYKWEFGEWN (493 aa). N48, N133, N196, N220, N302, and N309 each carry an N-linked (GlcNAc...) asparagine glycan. Catalysis depends on S318, which acts as the Charge relay system. N-linked (GlcNAc...) asparagine glycosylation occurs at N361. The tract at residues 481-502 is disordered; it reads RRGPKRQPGGEDPKHGGVPKPV.

Belongs to the AB hydrolase superfamily. Lipase family. As to quaternary structure, binds to both phosphatidylinositol (PI) and phosphatidylinositol 3,5-bisphosphate (PIP2).

It is found in the endosome. Its subcellular location is the multivesicular body membrane. The protein localises to the prevacuolar compartment membrane. It catalyses the reaction a triacylglycerol + H2O = a diacylglycerol + a fatty acid + H(+). Its function is as follows. Lipase which is essential for lysis of subvacuolar cytoplasm to vacuole targeted bodies and intravacuolar autophagic bodies. Involved in the lysis of intravacuolar multivesicular body (MVB) vesicles. The intravacuolar membrane disintegration by ATG15 is critical to life span extension. The protein is Putative lipase ATG15 (ATG15) of Cryptococcus neoformans var. neoformans serotype D (strain B-3501A) (Filobasidiella neoformans).